The primary structure comprises 88 residues: Phosphocarrier protein HPr (88 aa).

An HPr domain is found at 1–88; the sequence is MEQNSYVIID…DVLSKEGLTK (88 aa). His-15 acts as the Pros-phosphohistidine intermediate in catalysis. Ser-46 carries the post-translational modification Phosphoserine; by HPrK/P.

The protein resides in the cytoplasm. With respect to regulation, phosphorylation on Ser-46 inhibits the phosphoryl transfer from enzyme I to HPr. General (non sugar-specific) component of the phosphoenolpyruvate-dependent sugar phosphotransferase system (sugar PTS). This major carbohydrate active-transport system catalyzes the phosphorylation of incoming sugar substrates concomitantly with their translocation across the cell membrane. The phosphoryl group from phosphoenolpyruvate (PEP) is transferred to the phosphoryl carrier protein HPr by enzyme I. Phospho-HPr then transfers it to the PTS EIIA domain. Functionally, P-Ser-HPr interacts with the catabolite control protein A (CcpA), forming a complex that binds to DNA at the catabolite response elements cre, operator sites preceding a large number of catabolite-regulated genes. Thus, P-Ser-HPr is a corepressor in carbon catabolite repression (CCR), a mechanism that allows bacteria to coordinate and optimize the utilization of available carbon sources. P-Ser-HPr also plays a role in inducer exclusion, in which it probably interacts with several non-PTS permeases and inhibits their transport activity. The sequence is that of Phosphocarrier protein HPr (ptsH) from Staphylococcus aureus (strain MSSA476).